The chain runs to 185 residues: Elongation factor P (185 aa).

This sequence belongs to the elongation factor P family.

It is found in the cytoplasm. It functions in the pathway protein biosynthesis; polypeptide chain elongation. Functionally, involved in peptide bond synthesis. Stimulates efficient translation and peptide-bond synthesis on native or reconstituted 70S ribosomes in vitro. Probably functions indirectly by altering the affinity of the ribosome for aminoacyl-tRNA, thus increasing their reactivity as acceptors for peptidyl transferase. The sequence is that of Elongation factor P from Streptococcus pyogenes serotype M4 (strain MGAS10750).